A 303-amino-acid polypeptide reads, in one-letter code: Protein-lysine N-methyltransferase rrg1 (303 aa).

S-adenosyl-L-methionine contacts are provided by residues tryptophan 117, 143 to 145 (GAG), aspartate 165, tryptophan 198, and serine 221.

It belongs to the class I-like SAM-binding methyltransferase superfamily. METTL21 family.

It localises to the cytoplasm. Its subcellular location is the nucleus. Functionally, S-adenosyl-L-methionine-dependent protein-lysine N-methyltransferase that methylates elongation factor 2 and elongation factor 3A. The polypeptide is Protein-lysine N-methyltransferase rrg1 (Schizosaccharomyces pombe (strain 972 / ATCC 24843) (Fission yeast)).